A 114-amino-acid polypeptide reads, in one-letter code: MISIMMKVSLAVFMLAGGIIKVSRVPFQVEHWRHYQYPLWFLTVTGILEIAGALAMTAGIWNRYAAIGAGVLFVVLMAGAIHAHMFRARQSVIMAIQAMICLIVSIMIIMGSYT.

A run of 3 helical transmembrane segments spans residues 38 to 60 (PLWF…TAGI), 64 to 86 (YAAI…AHMF), and 91 to 113 (SVIM…MGSY).

It is found in the cell membrane. This is an uncharacterized protein from Bacillus subtilis (strain 168).